A 213-amino-acid chain; its full sequence is Thymidylate kinase (213 aa).

An ATP-binding site is contributed by 10–17 (GLEGAGKT).

It belongs to the thymidylate kinase family.

The catalysed reaction is dTMP + ATP = dTDP + ADP. In terms of biological role, phosphorylation of dTMP to form dTDP in both de novo and salvage pathways of dTTP synthesis. This chain is Thymidylate kinase, found in Salmonella choleraesuis (strain SC-B67).